Consider the following 420-residue polypeptide: Gamma-glutamyl phosphate reductase 2 (420 aa).

Belongs to the gamma-glutamyl phosphate reductase family.

The protein localises to the cytoplasm. The enzyme catalyses L-glutamate 5-semialdehyde + phosphate + NADP(+) = L-glutamyl 5-phosphate + NADPH + H(+). It functions in the pathway amino-acid biosynthesis; L-proline biosynthesis; L-glutamate 5-semialdehyde from L-glutamate: step 2/2. Functionally, catalyzes the NADPH-dependent reduction of L-glutamate 5-phosphate into L-glutamate 5-semialdehyde and phosphate. The product spontaneously undergoes cyclization to form 1-pyrroline-5-carboxylate. This is Gamma-glutamyl phosphate reductase 2 from Synechocystis sp. (strain ATCC 27184 / PCC 6803 / Kazusa).